We begin with the raw amino-acid sequence, 526 residues long: Light-independent protochlorophyllide reductase subunit B (526 aa).

A [4Fe-4S] cluster-binding site is contributed by Asp36. The active-site Proton donor is the Asp290. Substrate is bound at residue 425–426; it reads GL.

Belongs to the ChlB/BchB/BchZ family. Protochlorophyllide reductase is composed of three subunits; ChlL, ChlN and ChlB. Forms a heterotetramer of two ChlB and two ChlN subunits. The cofactor is [4Fe-4S] cluster.

The enzyme catalyses chlorophyllide a + oxidized 2[4Fe-4S]-[ferredoxin] + 2 ADP + 2 phosphate = protochlorophyllide a + reduced 2[4Fe-4S]-[ferredoxin] + 2 ATP + 2 H2O. Its pathway is porphyrin-containing compound metabolism; chlorophyll biosynthesis (light-independent). In terms of biological role, component of the dark-operative protochlorophyllide reductase (DPOR) that uses Mg-ATP and reduced ferredoxin to reduce ring D of protochlorophyllide (Pchlide) to form chlorophyllide a (Chlide). This reaction is light-independent. The NB-protein (ChlN-ChlB) is the catalytic component of the complex. This is Light-independent protochlorophyllide reductase subunit B from Prochlorococcus marinus subsp. pastoris (strain CCMP1986 / NIES-2087 / MED4).